Here is a 365-residue protein sequence, read N- to C-terminus: N-glycosylase/DNA lyase OGG1 (365 aa).

The span at 1 to 16 (MKRPRPTSQPSISSTV) shows a compositional bias: polar residues. A disordered region spans residues 1 to 24 (MKRPRPTSQPSISSTVKPPLSPPV). The DNA site is built by Asn162, Arg167, and Arg215. The active-site Schiff-base intermediate with DNA is Lys261. 2 residues coordinate 8-oxoguanine: Pro278 and Asp280. His282 serves as a coordination point for DNA. 2 residues coordinate 8-oxoguanine: Gln324 and Phe328.

This sequence belongs to the type-1 OGG1 family. As to expression, expressed in stems, roots, rosette and cauline leaves, flowers and seeds.

The protein resides in the nucleus. It carries out the reaction 2'-deoxyribonucleotide-(2'-deoxyribose 5'-phosphate)-2'-deoxyribonucleotide-DNA = a 3'-end 2'-deoxyribonucleotide-(2,3-dehydro-2,3-deoxyribose 5'-phosphate)-DNA + a 5'-end 5'-phospho-2'-deoxyribonucleoside-DNA + H(+). Functionally, involved in repair of DNA damaged by oxidation by incising DNA at 8-oxoG residues. Excises 7,8-dihydro-8-oxoguanine and 2,6-diamino-4-hydroxy-5-N-methylformamidopyrimidine (Fapy) from damaged DNA. Has a beta-lyase activity that nicks DNA 3' to the lesion. The protein is N-glycosylase/DNA lyase OGG1 (OGG1) of Arabidopsis thaliana (Mouse-ear cress).